Reading from the N-terminus, the 779-residue chain is Pleckstrin homology domain-containing family A member 4 (779 aa).

Residues 54-153 (PVHIRGWLHK…WLRALGKASR (100 aa)) enclose the PH domain. Disordered stretches follow at residues 152–355 (SRAE…LPGP), 495–669 (AGLG…SGGH), and 694–766 (SPER…QEEG). Ser-164 bears the Phosphoserine mark. Over residues 183–193 (VNRREEGRTSE) the composition is skewed to basic and acidic residues. 2 stretches are compositionally biased toward low complexity: residues 246–259 (PRPRSAPVRRPPLS) and 324–334 (QSTQVSSGSST). The segment covering 517–527 (QREESSERESL) has biased composition (basic and acidic residues). The segment covering 528-540 (SESLELSSPQSPE) has biased composition (low complexity). Phosphoserine is present on Ser-562. Over residues 567–580 (RASSPECRQQSSPL) the composition is skewed to polar residues. Low complexity-rich tracts occupy residues 608–627 (GLSLPRPTSPRLLTLGRTLS) and 649–659 (SSGSWSSPRHS). Polar residues predominate over residues 720–740 (VTSSPTSHKANSATTGFSCQG).

The protein resides in the cytoplasm. Its subcellular location is the membrane. Its function is as follows. Binds specifically to phosphatidylinositol 3-phosphate (PtdIns3P), but not to other phosphoinositides. This is Pleckstrin homology domain-containing family A member 4 (Plekha4) from Rattus norvegicus (Rat).